The chain runs to 135 residues: Rheacalcin-1 (135 aa).

3 cysteine pairs are disulfide-bonded: C6-C17, C34-C131, and C106-C123. One can recognise a C-type lectin domain in the interval 13-132 (FRGNCYGYFR…CSERNAFICK (120 aa)).

It localises to the secreted. It is found in the extracellular space. The protein localises to the extracellular matrix. The sequence is that of Rheacalcin-1 from Rhea americana (Greater rhea).